The sequence spans 401 residues: Inositol phosphorylceramide synthase catalytic subunit AUR1 (401 aa).

Topologically, residues 1–41 are cytoplasmic; sequence MANPFSRWFLSERPPNCHVADLETSLDPHQTLLKVQKYKPA. A helical transmembrane segment spans residues 42 to 62; the sequence is LSDWVHYIFLGSIMLFVFITN. Residues 63–64 lie on the Lumenal side of the membrane; it reads PA. A helical transmembrane segment spans residues 65-85; the sequence is PWIFKILFYCFLGTLFIIPAT. Over 86–87 the chain is Cytoplasmic; sequence SQ. A helical membrane pass occupies residues 88–108; it reads FFFNALPILTWVALYFTSSYF. Residues 109-155 are Lumenal-facing; that stretch reads PDDRRPPITVKVLPAVETILYGDNLSDILATSTNSFLDILAWLPYGL. A glycan (N-linked (GlcNAc...) asparagine) is linked at asparagine 132. A helical transmembrane segment spans residues 156-176; sequence FHFGAPFVVAAILFVFGPPTV. The Cytoplasmic portion of the chain corresponds to 177-178; that stretch reads LQ. The chain crosses the membrane as a helical span at residues 179–199; sequence GYAFAFGYMNLFGVIMQNVFP. At 200–245 the chain is on the lumenal side; it reads AAPPWYKILYGLQSANYDMHGSPGGLARIDKLLGINMYTTAFSNSS. A helical transmembrane segment spans residues 246-266; sequence VIFGAFPSLHSGCATMEALFF. Topologically, residues 267-268 are cytoplasmic; it reads CY. Residues 269 to 289 traverse the membrane as a helical segment; the sequence is CFPKLKPLFIAYVCWLWWSTM. The Lumenal portion of the chain corresponds to 290–291; it reads YL. Residues 292-312 traverse the membrane as a helical segment; that stretch reads THHYFVDLMAGSVLSYVIFQY. At 313–401 the chain is on the cytoplasmic side; sequence TKYTHLPIVD…SITSLGVKRA (89 aa). The segment at 374–401 is disordered; that stretch reads VSPSLFDGSTSVSRSSATSITSLGVKRA. Positions 382–395 are enriched in low complexity; the sequence is STSVSRSSATSITS. A phosphoserine mark is found at serine 392 and serine 395.

It belongs to the AUR1 family. Component of the inositol phosphorylceramide synthase complex composed of at least AUR1 and KEI1.

The protein localises to the golgi apparatus. It is found in the golgi stack membrane. The catalysed reaction is an N-(2R-hydroxy-very-long-chain fatty acyl)-(R)-4-hydroxysphingoid base + a 1,2-diacyl-sn-glycero-3-phospho-(1D-myo-inositol) = a 1D-myo-inositol-1-phospho-N-[(R)-2-hydroxy-very-long-chain fatty acyl]-(R)-4-hydroxysphingoid base + a 1,2-diacyl-sn-glycerol. Its activity is regulated as follows. Inhibited by aureobasidin A (AbA), khafrefungin and rustmicin. Functionally, catalytic component of the inositol phosphorylceramide synthase which catalyzes the addition of a phosphorylinositol group onto ceramide to form inositol phosphorylceramide, an essential step in sphingolipid biosynthesis. The sequence is that of Inositol phosphorylceramide synthase catalytic subunit AUR1 from Saccharomyces cerevisiae (strain ATCC 204508 / S288c) (Baker's yeast).